A 209-amino-acid chain; its full sequence is Large ribosomal subunit protein uL3 (209 aa).

The interval 132 to 153 is disordered; sequence ATHGNSLSHRVPGSIGQNQTPG. Q150 bears the N5-methylglutamine mark.

The protein belongs to the universal ribosomal protein uL3 family. In terms of assembly, part of the 50S ribosomal subunit. Forms a cluster with proteins L14 and L19. Post-translationally, methylated by PrmB.

Its function is as follows. One of the primary rRNA binding proteins, it binds directly near the 3'-end of the 23S rRNA, where it nucleates assembly of the 50S subunit. The protein is Large ribosomal subunit protein uL3 of Enterobacter sp. (strain 638).